The following is a 225-amino-acid chain: PKHD-type hydroxylase HEAR3399 (225 aa).

The region spanning 77–177 (RYMPPLFNRY…RVCSFFWLQS (101 aa)) is the Fe2OG dioxygenase domain. 3 residues coordinate Fe cation: His-95, Asp-97, and His-158. Arg-168 provides a ligand contact to 2-oxoglutarate.

The cofactor is Fe(2+). L-ascorbate serves as cofactor.

This Herminiimonas arsenicoxydans protein is PKHD-type hydroxylase HEAR3399.